A 263-amino-acid chain; its full sequence is 3-deoxy-manno-octulosonate cytidylyltransferase (263 aa).

It belongs to the KdsB family.

It localises to the cytoplasm. It carries out the reaction 3-deoxy-alpha-D-manno-oct-2-ulosonate + CTP = CMP-3-deoxy-beta-D-manno-octulosonate + diphosphate. It functions in the pathway nucleotide-sugar biosynthesis; CMP-3-deoxy-D-manno-octulosonate biosynthesis; CMP-3-deoxy-D-manno-octulosonate from 3-deoxy-D-manno-octulosonate and CTP: step 1/1. Its pathway is bacterial outer membrane biogenesis; lipopolysaccharide biosynthesis. Functionally, activates KDO (a required 8-carbon sugar) for incorporation into bacterial lipopolysaccharide in Gram-negative bacteria. The chain is 3-deoxy-manno-octulosonate cytidylyltransferase from Burkholderia mallei (strain NCTC 10229).